The primary structure comprises 528 residues: Ankyrin repeat and death domain-containing protein 1B (528 aa).

ANK repeat units lie at residues P67–V96, M100–V129, H133–A162, D166–Q197, K201–E230, G234–E263, L267–Q296, P300–I329, K333–A362, and Q366–W395. A Death domain is found at T427–K515.

The protein is Ankyrin repeat and death domain-containing protein 1B (ANKDD1B) of Homo sapiens (Human).